A 341-amino-acid polypeptide reads, in one-letter code: DnaJ homolog subfamily C member 22 (341 aa).

The region spanning 3–50 (KGLLVTYALWAVGGPAGLHHLYLGRDSHALLWMLTLGGGGLGWLWEFW) is the TM2 domain. Helical transmembrane passes span 5-25 (LLVT…HLYL), 30-50 (HALL…WEFW), 81-101 (FAAQ…SLSS), 105-125 (FYIV…AAVG), 135-155 (LGAA…ILPI), 185-205 (LGLA…CNTA), and 218-238 (FLNW…VLLL). The 65-residue stretch at 277–341 (LAYQVLGLSE…QPRKPRGSRR (65 aa)) folds into the J domain.

It is found in the membrane. In terms of biological role, may function as a co-chaperone. The protein is DnaJ homolog subfamily C member 22 (DNAJC22) of Pongo abelii (Sumatran orangutan).